The chain runs to 167 residues: Peptide deformylase (167 aa).

Fe cation is bound by residues Cys91 and His133. Residue Glu134 is part of the active site. His137 lines the Fe cation pocket.

This sequence belongs to the polypeptide deformylase family. It depends on Fe(2+) as a cofactor.

It catalyses the reaction N-terminal N-formyl-L-methionyl-[peptide] + H2O = N-terminal L-methionyl-[peptide] + formate. Removes the formyl group from the N-terminal Met of newly synthesized proteins. Requires at least a dipeptide for an efficient rate of reaction. N-terminal L-methionine is a prerequisite for activity but the enzyme has broad specificity at other positions. This Buchnera aphidicola subsp. Schizaphis graminum (strain Sg) protein is Peptide deformylase.